Here is a 509-residue protein sequence, read N- to C-terminus: Circadian clock oscillator protein KaiC (509 aa).

KaiC domains are found at residues 1–243 (MKDK…IIVF) and 257–509 (IRIS…IEKN). ATP contacts are provided by Gly45, Thr46, Gly47, Lys48, Thr49, Ser85, Lys220, Leu221, Arg222, Thr224, His226, Asp237, Thr286, Gly287, Thr288, Gly289, Lys290, and Thr291. Thr49 lines the Mg(2+) pocket. Mg(2+) contacts are provided by Thr291 and Glu314. Trp327 is a binding site for ATP. Phosphoserine; by autocatalysis is present on Ser427. Thr428 carries the phosphothreonine; by autocatalysis modification. The ATP site is built by Arg447, Lys453, Met454, Arg455, Ser457, His459, and Lys461.

Belongs to the KaiC family. In terms of assembly, homohexamer; hexamerization is dependent on ATP-binding. Component of the KaiBC complex. KaiC interacts with SasA, activating its autokinase function and leading to RpaA activation. The cofactor is Mg(2+). Post-translationally, phosphorylated on serine and threonine residues by autocatalysis. Has a 4 step phosphorylation cycle; the autokinase acts first on Thr-428, then Ser-427. When Ser-427 is modified KaiC switches to an autophosphatase mode, acting first on phospho-Thr-428 then phospho-Ser-427.

The enzyme catalyses L-seryl-[protein] + ATP = O-phospho-L-seryl-[protein] + ADP + H(+). It carries out the reaction L-threonyl-[protein] + ATP = O-phospho-L-threonyl-[protein] + ADP + H(+). It catalyses the reaction ATP + H2O = ADP + phosphate + H(+). Functionally, central component of the KaiBC oscillator complex, which constitutes the main circadian regulator in cyanobacteria. Its composition changes during the circadian cycle to control KaiC phosphorylation. Autophosphorylates and has a weak ATPase activity; ATPase activity defines the circadian period. This is Circadian clock oscillator protein KaiC from Prochlorococcus marinus subsp. pastoris (strain CCMP1986 / NIES-2087 / MED4).